Here is a 396-residue protein sequence, read N- to C-terminus: Probable sugar efflux transporter (396 aa).

A run of 12 helical transmembrane segments spans residues 15 to 35, 50 to 70, 81 to 101, 103 to 123, 136 to 156, 169 to 189, 202 to 222, 246 to 266, 275 to 295, 301 to 321, 333 to 353, and 364 to 384; these read VVTL…PVGL, VGIM…PFML, LICL…AWNF, VLVI…SITA, AQAL…GLPI, TFFA…KLLP, LPLL…VVVV, FATV…LVFG, SLVS…LPAA, LAIL…GMQV, VAMA…ALVG, and AIGY…VLIF.

The protein belongs to the major facilitator superfamily. SotB (TC 2.A.1.2) family.

Its subcellular location is the cell inner membrane. Involved in the efflux of sugars. The physiological role may be the reduction of the intracellular concentration of toxic sugars or sugar metabolites. In Salmonella paratyphi A (strain ATCC 9150 / SARB42), this protein is Probable sugar efflux transporter.